The chain runs to 382 residues: Glutamyl-tRNA reductase (382 aa).

Substrate contacts are provided by residues 38–41 (TCNR), serine 85, 90–92 (ENQ), and glutamine 96. Cysteine 39 (nucleophile) is an active-site residue. 164 to 169 (GAGEMG) lines the NADP(+) pocket.

The protein belongs to the glutamyl-tRNA reductase family. In terms of assembly, homodimer.

The catalysed reaction is (S)-4-amino-5-oxopentanoate + tRNA(Glu) + NADP(+) = L-glutamyl-tRNA(Glu) + NADPH + H(+). The protein operates within porphyrin-containing compound metabolism; protoporphyrin-IX biosynthesis; 5-aminolevulinate from L-glutamyl-tRNA(Glu): step 1/2. Functionally, catalyzes the NADPH-dependent reduction of glutamyl-tRNA(Glu) to glutamate 1-semialdehyde (GSA). This is Glutamyl-tRNA reductase from Methanococcus maripaludis (strain C6 / ATCC BAA-1332).